The primary structure comprises 320 residues: MTLTASPTAARTPAEEKARFEGNKLAKRLARETTRAIADYNMIEAGDKVMVCLSGGKDSYALLDILLSLQKRAPFAFEIIAVNLDQKQPGFPPEILPDYLRALGVPFHIETQDTYSIVTRVIPEGKTMCSLCSRLRRGILYRVASELGATKIALGHHRDDILGTFFLNLFYGGKAKGMPPKLVSDDGRHTVIRPLVYVPESDLIAYAQFKQFPIIPCNLCGSQENLKRKEVGRMIQEWDRKHPGRSWNVFNALSRVVPSHLMDRDLFDFVGLKPTGVADAGGDTAFDQIDPEPDTAGPGCASDAPAGQADGMAEQRVVFR.

The PP-loop motif motif lies at 54-59 (SGGKDS). [4Fe-4S] cluster contacts are provided by C129, C132, and C220.

This sequence belongs to the TtcA family. Homodimer. Mg(2+) serves as cofactor. [4Fe-4S] cluster is required as a cofactor.

The protein localises to the cytoplasm. It carries out the reaction cytidine(32) in tRNA + S-sulfanyl-L-cysteinyl-[cysteine desulfurase] + AH2 + ATP = 2-thiocytidine(32) in tRNA + L-cysteinyl-[cysteine desulfurase] + A + AMP + diphosphate + H(+). Its pathway is tRNA modification. Catalyzes the ATP-dependent 2-thiolation of cytidine in position 32 of tRNA, to form 2-thiocytidine (s(2)C32). The sulfur atoms are provided by the cysteine/cysteine desulfurase (IscS) system. The sequence is that of tRNA-cytidine(32) 2-sulfurtransferase from Bordetella pertussis (strain Tohama I / ATCC BAA-589 / NCTC 13251).